The primary structure comprises 460 residues: SPbeta prophage-derived uncharacterized protein YopQ (460 aa).

In Bacillus subtilis (strain 168), this protein is SPbeta prophage-derived uncharacterized protein YopQ (yopQ).